The sequence spans 320 residues: MKLNLRFPSYFLPVVAASAFLVSCATPNTYEVQRAALIQLVEEDERQNYIQKGSMGANAVMTAAKAETKTAEKTATSTKAASIELKKTDTDIKTTTTTENKSASGYKLDTLFGDYILWVVDHLSGLLFSPKTNNSTTTQKIQLITEDKMILDGGNLTVEKNHEHGHTHKNGETHEHDHDHHEGEEEVIVGRALSFANGLFLVVDLKEEKHEEKKEAKSEMSMNSKDMVMMTKTEMMSKEMKSEQKMEKKEEHEHPHKKLSLSTTAYKFGQSFNILEFTGAMHHKTAHNNETEFKNLGKKYGGMTEYTIVDFDFNPPKPTK.

The signal sequence occupies residues 1 to 23; sequence MKLNLRFPSYFLPVVAASAFLVS. Cys-24 carries N-palmitoyl cysteine lipidation. The S-diacylglycerol cysteine moiety is linked to residue Cys-24. The disordered stretch occupies residues 160–181; it reads KNHEHGHTHKNGETHEHDHDHH.

The protein resides in the cell membrane. This is an uncharacterized protein from Mycoplasma pneumoniae (strain ATCC 29342 / M129 / Subtype 1) (Mycoplasmoides pneumoniae).